Consider the following 546-residue polypeptide: Sulfite oxidase, mitochondrial (546 aa).

Residues 1–80 (MLPRLYRSVA…YHDHRCRASQ (80 aa)) constitute a mitochondrion transit peptide. Positions 83-162 (PRIYSKEDVR…LAEYKIGELN (80 aa)) constitute a Cytochrome b5 heme-binding domain. His-119 contacts heme b. Position 124 is a phosphoserine (Ser-124). Positions 144, 146, and 148 each coordinate heme b. Residues 166 to 175 (RMSPPLEASD) are hinge. Residues 176 to 402 (PYSNDPMRHP…YSHWQRRDYK (227 aa)) form a moco domain region. Mo-molybdopterin contacts are provided by residues 216–220 (FTRNH), Cys-265, Asp-323, His-362, Arg-367, and 378–380 (HVK). The homodimerization stretch occupies residues 403 to 539 (GFSPSVDWDT…RGVLSNAWHR (137 aa)).

As to quaternary structure, homodimer. It depends on heme b as a cofactor. Requires Mo-molybdopterin as cofactor.

It localises to the mitochondrion intermembrane space. The enzyme catalyses sulfite + O2 + H2O = sulfate + H2O2. The protein operates within energy metabolism; sulfur metabolism. Its function is as follows. Catalyzes the oxidation of sulfite to sulfate, the terminal reaction in the oxidative degradation of sulfur-containing amino acids. This chain is Sulfite oxidase, mitochondrial, found in Rattus norvegicus (Rat).